The primary structure comprises 237 residues: Sugar fermentation stimulation protein homolog (237 aa).

Belongs to the SfsA family.

The sequence is that of Sugar fermentation stimulation protein homolog from Methylobacterium radiotolerans (strain ATCC 27329 / DSM 1819 / JCM 2831 / NBRC 15690 / NCIMB 10815 / 0-1).